The following is a 140-amino-acid chain: Cytochrome B5 isoform D (140 aa).

The region spanning 5-81 (GKVFTLSEVS…LDEYYVGDID (77 aa)) is the Cytochrome b5 heme-binding domain. 2 residues coordinate heme: H40 and H64. The helical transmembrane segment at 109–129 (FVIKLLQFLVPLLILGLAFGI) threads the bilayer.

Belongs to the cytochrome b5 family. Interacts with CER1, BI-1, FAH1 and FAH2. In terms of tissue distribution, expressed in roots, stems, leaves, flowers and siliques.

The protein localises to the endoplasmic reticulum membrane. Functionally, membrane bound hemoprotein which function as an electron carrier for several membrane bound oxygenases, including fatty acid desaturases. The polypeptide is Cytochrome B5 isoform D (Arabidopsis thaliana (Mouse-ear cress)).